A 236-amino-acid polypeptide reads, in one-letter code: MSEIALIGKKIGMTREFYKTGRLVPVTVIKMEKARVIQVIEEEKRGYKAVQLGFGKIKASKLTKAMKGLYAKKNTEAKKKLKEFRVKDTELYKEGNEFGLEIFNEVKFVDTTSKTIGKGFAGAMKRHNFGGLRATHGVSVSHRSHGSTGQRQDPGKVFKGKKMAGHMGDRVRTMQNLEIIKTDIENELLYLKGSIPGSKNTEILVKKSVKVINKMTINEKIAAAEEAKKTPDKKKK.

The span at 139–149 (SVSHRSHGSTG) shows a compositional bias: low complexity. The tract at residues 139–165 (SVSHRSHGSTGQRQDPGKVFKGKKMAG) is disordered. Position 152 is an N5-methylglutamine (Gln152).

The protein belongs to the universal ribosomal protein uL3 family. As to quaternary structure, part of the 50S ribosomal subunit. Forms a cluster with proteins L14 and L19. Methylated by PrmB.

Its function is as follows. One of the primary rRNA binding proteins, it binds directly near the 3'-end of the 23S rRNA, where it nucleates assembly of the 50S subunit. This Pelagibacter ubique (strain HTCC1062) protein is Large ribosomal subunit protein uL3.